The sequence spans 105 residues: UPF0145 protein lpl0253 (105 aa).

This sequence belongs to the UPF0145 family.

In Legionella pneumophila (strain Lens), this protein is UPF0145 protein lpl0253.